The chain runs to 148 residues: Nucleoside diphosphate kinase (148 aa).

ATP-binding residues include Lys9, Phe57, Arg85, Thr91, Arg102, and Asn112. The active-site Pros-phosphohistidine intermediate is His115.

Belongs to the NDK family. Requires Mg(2+) as cofactor.

The catalysed reaction is a 2'-deoxyribonucleoside 5'-diphosphate + ATP = a 2'-deoxyribonucleoside 5'-triphosphate + ADP. It catalyses the reaction a ribonucleoside 5'-diphosphate + ATP = a ribonucleoside 5'-triphosphate + ADP. Its function is as follows. Major role in the synthesis of nucleoside triphosphates other than ATP. The ATP gamma phosphate is transferred to the NDP beta phosphate via a ping-pong mechanism, using a phosphorylated active-site intermediate. This Helianthus annuus (Common sunflower) protein is Nucleoside diphosphate kinase.